We begin with the raw amino-acid sequence, 204 residues long: Large ribosomal subunit protein eL15 (204 aa).

The protein belongs to the eukaryotic ribosomal protein eL15 family. Component of the large ribosomal subunit.

Its subcellular location is the cytoplasm. Functionally, component of the large ribosomal subunit. The ribosome is a large ribonucleoprotein complex responsible for the synthesis of proteins in the cell. This chain is Large ribosomal subunit protein eL15 (rpl15), found in Carassius auratus (Goldfish).